Here is a 447-residue protein sequence, read N- to C-terminus: GTPase Der (447 aa).

EngA-type G domains lie at Gln4 to Glu165 and Leu180 to Asn357. GTP-binding positions include Gly10 to Ser17, Asp57 to Leu61, Asn119 to Glu122, Gly186 to Ser193, Asp233 to Leu237, and Asn298 to Asp301. Residues Lys358–Lys443 enclose the KH-like domain.

The protein belongs to the TRAFAC class TrmE-Era-EngA-EngB-Septin-like GTPase superfamily. EngA (Der) GTPase family. Associates with the 50S ribosomal subunit.

Its function is as follows. GTPase that plays an essential role in the late steps of ribosome biogenesis. In Rickettsia rickettsii (strain Sheila Smith), this protein is GTPase Der.